A 213-amino-acid chain; its full sequence is MYQDKILVRQLGLQPYEAISQAMHNFTDMRDENSHDEIWLVEHYPVFTQGQAGKAEHILMPGDIPVVQSDRGGQVTYHGPGQQVMYVLLNLKRRKLGVRDLVTLLEQTVVNTLAEMGIEAHPRADAPGVYVGEKKICSLGLRIRRGCSFHGLALNVNMDLSPFLRINPCGYAGMEMAKITQWKEDATTDNIAPRLLANILALLNNPPYEYIAT.

The region spanning 32–207 is the BPL/LPL catalytic domain; sequence ENSHDEIWLV…NILALLNNPP (176 aa). Substrate is bound by residues 71–78, 138–140, and 151–153; these read RGGQVTYH, SLG, and GLA. Residue C169 is the Acyl-thioester intermediate of the active site.

This sequence belongs to the LipB family.

It localises to the cytoplasm. The catalysed reaction is octanoyl-[ACP] + L-lysyl-[protein] = N(6)-octanoyl-L-lysyl-[protein] + holo-[ACP] + H(+). Its pathway is protein modification; protein lipoylation via endogenous pathway; protein N(6)-(lipoyl)lysine from octanoyl-[acyl-carrier-protein]: step 1/2. In terms of biological role, catalyzes the transfer of endogenously produced octanoic acid from octanoyl-acyl-carrier-protein onto the lipoyl domains of lipoate-dependent enzymes. Lipoyl-ACP can also act as a substrate although octanoyl-ACP is likely to be the physiological substrate. The sequence is that of Octanoyltransferase from Salmonella typhi.